Here is a 201-residue protein sequence, read N- to C-terminus: UPF0301 protein BP0319 (201 aa).

It belongs to the UPF0301 (AlgH) family.

The polypeptide is UPF0301 protein BP0319 (Bordetella pertussis (strain Tohama I / ATCC BAA-589 / NCTC 13251)).